A 210-amino-acid polypeptide reads, in one-letter code: GTP pyrophosphokinase YwaC (210 aa).

It belongs to the RelA/SpoT family. As to quaternary structure, homotetramer.

It carries out the reaction GTP + ATP = guanosine 3'-diphosphate 5'-triphosphate + AMP. It participates in purine metabolism; ppGpp biosynthesis; ppGpp from GTP: step 1/2. Functions as a (p)ppGpp synthase; GDP can be used instead of GTP, resulting in an increase of (p)ppGpp synthesis. Overexpression in relA mutants (triple relA-yjbM-ywaC deletions and single relA deletions) leads to growth arrest; GTP levels fall drastically, various guanine-related nucleotides are synthesized (ppGp or pGpp), the cellular transcriptional profile changes dramatically and 70S ribosome dimerization occurs. Overexpression in the presence of a wild-type relA gene does not have these effects. In eubacteria ppGpp (guanosine 3'-diphosphate 5'-diphosphate) is a mediator of the stringent response that coordinates a variety of cellular activities in response to changes in nutritional abundance. activities in response to changes in nutritional abundance. YwaC has probably a minor role in stringent response. The sequence is that of GTP pyrophosphokinase YwaC (ywaC) from Bacillus subtilis (strain 168).